The following is a 504-amino-acid chain: Chorion-specific transcription factor GCMb (504 aa).

Positions 19 to 174 form a DNA-binding region, GCM; it reads LTWDINDPQM…KSETEGRRSA (156 aa). 8 residues coordinate Zn(2+): Cys-81, Cys-87, Cys-91, Cys-118, Cys-121, Cys-130, His-157, and His-159. Basic and acidic residues-rich tracts occupy residues 155–172 and 188–203; these read GVHDHPRPESKSETEGRR and RRSEEPEARSTQDIRG. Residues 155–203 form a disordered region; it reads GVHDHPRPESKSETEGRRSALKRQMASFYQPQKRRSEEPEARSTQDIRG. Residues 379 to 393 form a C-terminal conserved inhibitory domain (CCID) region; sequence LQTVITTTVAYQAYQ. Residues 438–472 are disordered; the sequence is ASPSGRAPLKVPGDCQAPRPTLDFPQEADPSGTDG.

The protein localises to the nucleus. Transcription factor that binds specific sequences on gene promoters and activate their transcription. Through the regulation of gene transcription, may play a role in parathyroid gland development. The chain is Chorion-specific transcription factor GCMb from Mus musculus (Mouse).